The chain runs to 473 residues: Ribulose bisphosphate carboxylase large chain (473 aa).

2 residues coordinate substrate: asparagine 116 and threonine 166. The active-site Proton acceptor is the lysine 168. Lysine 170 provides a ligand contact to substrate. The Mg(2+) site is built by lysine 194, aspartate 196, and glutamate 197. Lysine 194 bears the N6-carboxylysine mark. The active-site Proton acceptor is the histidine 287. Arginine 288, histidine 320, and serine 372 together coordinate substrate.

This sequence belongs to the RuBisCO large chain family. Type I subfamily. Heterohexadecamer of 8 large chains and 8 small chains. Mg(2+) serves as cofactor.

The enzyme catalyses 2 (2R)-3-phosphoglycerate + 2 H(+) = D-ribulose 1,5-bisphosphate + CO2 + H2O. It catalyses the reaction D-ribulose 1,5-bisphosphate + O2 = 2-phosphoglycolate + (2R)-3-phosphoglycerate + 2 H(+). RuBisCO catalyzes two reactions: the carboxylation of D-ribulose 1,5-bisphosphate, the primary event in carbon dioxide fixation, as well as the oxidative fragmentation of the pentose substrate. Both reactions occur simultaneously and in competition at the same active site. This Nitrosomonas sp. (strain ENI-11) protein is Ribulose bisphosphate carboxylase large chain.